Consider the following 543-residue polypeptide: CTP synthase (543 aa).

Residues 1-265 (MARYIFITGG…DGEVLRHFGL (265 aa)) form an amidoligase domain region. Position 13 (S13) interacts with CTP. Residue S13 participates in UTP binding. 14–19 (SLGKGL) is a binding site for ATP. Y54 is a binding site for L-glutamine. Residue D71 participates in ATP binding. The Mg(2+) site is built by D71 and E139. CTP is bound by residues 146 to 148 (DIE), 186 to 191 (KTKPTQ), and K222. Residues 186 to 191 (KTKPTQ) and K222 each bind UTP. In terms of domain architecture, Glutamine amidotransferase type-1 spans 290 to 542 (TIGVVGKYVG…IAAAVKQARL (253 aa)). Residue G354 participates in L-glutamine binding. C381 functions as the Nucleophile; for glutamine hydrolysis in the catalytic mechanism. Residues 382–385 (LGMQ), E405, and R470 each bind L-glutamine. Catalysis depends on residues H515 and E517.

Belongs to the CTP synthase family. As to quaternary structure, homotetramer.

The catalysed reaction is UTP + L-glutamine + ATP + H2O = CTP + L-glutamate + ADP + phosphate + 2 H(+). It carries out the reaction L-glutamine + H2O = L-glutamate + NH4(+). It catalyses the reaction UTP + NH4(+) + ATP = CTP + ADP + phosphate + 2 H(+). Its pathway is pyrimidine metabolism; CTP biosynthesis via de novo pathway; CTP from UDP: step 2/2. Allosterically activated by GTP, when glutamine is the substrate; GTP has no effect on the reaction when ammonia is the substrate. The allosteric effector GTP functions by stabilizing the protein conformation that binds the tetrahedral intermediate(s) formed during glutamine hydrolysis. Inhibited by the product CTP, via allosteric rather than competitive inhibition. In terms of biological role, catalyzes the ATP-dependent amination of UTP to CTP with either L-glutamine or ammonia as the source of nitrogen. Regulates intracellular CTP levels through interactions with the four ribonucleotide triphosphates. This Novosphingobium aromaticivorans (strain ATCC 700278 / DSM 12444 / CCUG 56034 / CIP 105152 / NBRC 16084 / F199) protein is CTP synthase.